The chain runs to 208 residues: Small ribosomal subunit protein uS4 (208 aa).

The disordered stretch occupies residues 28–48 (YMERRPYGPGEHGRARKKQDS). The region spanning 95 to 160 (MRLDALVLRA…MPPFQVAAAG (66 aa)) is the S4 RNA-binding domain.

It belongs to the universal ribosomal protein uS4 family. Part of the 30S ribosomal subunit. Contacts protein S5. The interaction surface between S4 and S5 is involved in control of translational fidelity.

In terms of biological role, one of the primary rRNA binding proteins, it binds directly to 16S rRNA where it nucleates assembly of the body of the 30S subunit. With S5 and S12 plays an important role in translational accuracy. The sequence is that of Small ribosomal subunit protein uS4 from Arthrobacter sp. (strain FB24).